We begin with the raw amino-acid sequence, 795 residues long: Multiple C2 domain and transmembrane region protein 12 (795 aa).

C2 domains follow at residues 24–142, 180–298, and 341–463; these read RNPR…PQWY, VCAS…SAPA, and YSSD…TCSY. The Ca(2+) site is built by Asn57, Asp109, and Asn113. The next 4 membrane-spanning stretches (helical) occupy residues 590-610, 612-632, 730-750, and 752-772; these read CTPKFIALGVSFVFLFWEYYI, WLVTSWLVAYCIVLCIVVILL, FVLIILLALCYCSMLVVCLGW, and LHVRKCLIFVFICYWVQLPWF.

Belongs to the MCTP family. Requires Ca(2+) as cofactor. As to expression, expressed in root vascular tissues and meristems. Observed in flowers.

Its subcellular location is the endoplasmic reticulum membrane. Functionally, may function as a signaling molecule by regulating the trafficking of other regulators. This is Multiple C2 domain and transmembrane region protein 12 from Arabidopsis thaliana (Mouse-ear cress).